The chain runs to 368 residues: Cytochrome b (368 aa).

Helical transmembrane passes span F25 to M45, W69 to I90, W105 to L125, and F170 to I190. Residues H75 and H89 each contribute to the heme b site. The heme b site is built by H174 and H188. H193 is an a ubiquinone binding site. Transmembrane regions (helical) follow at residues Y218 to T238, L280 to H300, L312 to T332, and F339 to P358.

This sequence belongs to the cytochrome b family. As to quaternary structure, the cytochrome bc1 complex contains 3 respiratory subunits (MT-CYB, CYC1 and UQCRFS1), 2 core proteins (UQCRC1 and UQCRC2) and probably 6 low-molecular weight proteins. Heme b serves as cofactor.

The protein localises to the mitochondrion inner membrane. Functionally, component of the ubiquinol-cytochrome c reductase complex (complex III or cytochrome b-c1 complex) that is part of the mitochondrial respiratory chain. The b-c1 complex mediates electron transfer from ubiquinol to cytochrome c. Contributes to the generation of a proton gradient across the mitochondrial membrane that is then used for ATP synthesis. This is Cytochrome b (MT-CYB) from Notechis ater (Black tiger snake).